We begin with the raw amino-acid sequence, 188 residues long: Probable RNA 2'-phosphotransferase (188 aa).

Belongs to the KptA/TPT1 family.

Functionally, removes the 2'-phosphate from RNA via an intermediate in which the phosphate is ADP-ribosylated by NAD followed by a presumed transesterification to release the RNA and generate ADP-ribose 1''-2''-cyclic phosphate (APPR&gt;P). May function as an ADP-ribosylase. The chain is Probable RNA 2'-phosphotransferase from Pseudomonas savastanoi pv. phaseolicola (strain 1448A / Race 6) (Pseudomonas syringae pv. phaseolicola (strain 1448A / Race 6)).